The chain runs to 447 residues: Ribosomal protein uS12 methylthiotransferase RimO (447 aa).

Positions 4-114 (PKVGFVSLGC…VMEAVHEYVP (111 aa)) constitute an MTTase N-terminal domain. 6 residues coordinate [4Fe-4S] cluster: Cys13, Cys49, Cys78, Cys147, Cys151, and Cys154. The Radical SAM core domain occupies 133-370 (LTPKHYAYLK…MQVQQQISAA (238 aa)). In terms of domain architecture, TRAM spans 373 to 443 (QKRIGQTMTV…EYDLFAKLIK (71 aa)).

It belongs to the methylthiotransferase family. RimO subfamily. It depends on [4Fe-4S] cluster as a cofactor.

Its subcellular location is the cytoplasm. It carries out the reaction L-aspartate(89)-[ribosomal protein uS12]-hydrogen + (sulfur carrier)-SH + AH2 + 2 S-adenosyl-L-methionine = 3-methylsulfanyl-L-aspartate(89)-[ribosomal protein uS12]-hydrogen + (sulfur carrier)-H + 5'-deoxyadenosine + L-methionine + A + S-adenosyl-L-homocysteine + 2 H(+). Catalyzes the methylthiolation of an aspartic acid residue of ribosomal protein uS12. This is Ribosomal protein uS12 methylthiotransferase RimO from Acinetobacter baumannii (strain AB307-0294).